We begin with the raw amino-acid sequence, 797 residues long: Short transient receptor potential channel 4-associated protein (797 aa).

Ala-2 is modified (N-acetylalanine). The segment at Ala-2 to Met-400 is interaction with TNFRSF1A.

Component of the DCX(TRPC4AP) E3 ubiquitin ligase complex, at least composed of CUL4A, DDB1, TRPC4AP/TRUSS and RBX1. Interacts with MYC. Constitutively associated with TNFRSF1A. Directly interacts with TRADD, TRAF2, CHUK, IKBKB and IKBKG. Interacts with TRPC1, TRPC4 and TRPC5. Post-translationally, phosphorylated by GSK3B; phosphorylation is required for ubiquitination. Ubiquitinated by a SCF (SKP1-CUL1-F-box protein) E3 ubiquitin-protein ligase containing SKP2, leading to its degradation. Phosphorylation by GSK3B is required for ubiquitination. Widely expressed, with high levels in heart, liver and testis.

It localises to the cytoplasm. The protein resides in the perinuclear region. The protein operates within protein modification; protein ubiquitination. Functionally, substrate-recognition component of a DCX (DDB1-CUL4-X-box) E3 ubiquitin-protein ligase complex required for cell cycle control. The DCX(TRPC4AP) complex specifically mediates the polyubiquitination and subsequent degradation of MYC as part of the DesCEND (destruction via C-end degrons) pathway. The DesCEND (destruction via C-end degrons) pathway recognizes a C-degron located at the extreme C terminus of target proteins, leading to their ubiquitination and degradation. The DCX(TRPC4AP) complex specifically recognizes proteins with an arginine at the minus 3 position (R-3 motif) at the C-terminus, such as MYC, leading to their ubiquitination and degradation. Also participates in the activation of NFKB1 in response to ligation of TNFRSF1A, possibly by linking TNFRSF1A to the IKK signalosome. Involved in JNK activation via its interaction with TRAF2. Also involved in elevation of endoplasmic reticulum Ca(2+) storage reduction in response to CHRM1. The protein is Short transient receptor potential channel 4-associated protein of Mus musculus (Mouse).